The primary structure comprises 40 residues: Photosystem II reaction center protein J (40 aa).

Residues 8-28 (IPLWLIGTVTGIIVIGLIGIF) traverse the membrane as a helical segment.

Belongs to the PsbJ family. PSII is composed of 1 copy each of membrane proteins PsbA, PsbB, PsbC, PsbD, PsbE, PsbF, PsbH, PsbI, PsbJ, PsbK, PsbL, PsbM, PsbT, PsbX, PsbY, PsbZ, Psb30/Ycf12, at least 3 peripheral proteins of the oxygen-evolving complex and a large number of cofactors. It forms dimeric complexes.

It is found in the plastid. The protein localises to the chloroplast thylakoid membrane. Its function is as follows. One of the components of the core complex of photosystem II (PSII). PSII is a light-driven water:plastoquinone oxidoreductase that uses light energy to abstract electrons from H(2)O, generating O(2) and a proton gradient subsequently used for ATP formation. It consists of a core antenna complex that captures photons, and an electron transfer chain that converts photonic excitation into a charge separation. In Piper cenocladum (Ant piper), this protein is Photosystem II reaction center protein J.